An 89-amino-acid chain; its full sequence is Small ribosomal subunit protein uS15 (89 aa).

Belongs to the universal ribosomal protein uS15 family. As to quaternary structure, part of the 30S ribosomal subunit. Forms a bridge to the 50S subunit in the 70S ribosome, contacting the 23S rRNA.

One of the primary rRNA binding proteins, it binds directly to 16S rRNA where it helps nucleate assembly of the platform of the 30S subunit by binding and bridging several RNA helices of the 16S rRNA. Its function is as follows. Forms an intersubunit bridge (bridge B4) with the 23S rRNA of the 50S subunit in the ribosome. This Marinobacter nauticus (strain ATCC 700491 / DSM 11845 / VT8) (Marinobacter aquaeolei) protein is Small ribosomal subunit protein uS15.